The sequence spans 80 residues: Acyl carrier protein (80 aa).

In terms of domain architecture, Carrier spans 4–79; the sequence is EAILEKVRSI…DAVKYIEDKQ (76 aa). O-(pantetheine 4'-phosphoryl)serine is present on serine 39.

This sequence belongs to the acyl carrier protein (ACP) family. In terms of processing, 4'-phosphopantetheine is transferred from CoA to a specific serine of apo-ACP by AcpS. This modification is essential for activity because fatty acids are bound in thioester linkage to the sulfhydryl of the prosthetic group.

It is found in the cytoplasm. It functions in the pathway lipid metabolism; fatty acid biosynthesis. In terms of biological role, carrier of the growing fatty acid chain in fatty acid biosynthesis. The polypeptide is Acyl carrier protein (Prochlorococcus marinus (strain MIT 9313)).